Here is a 56-residue protein sequence, read N- to C-terminus: Large ribosomal subunit protein bL32 (56 aa).

Residues Met-1–His-37 form a disordered region.

The protein belongs to the bacterial ribosomal protein bL32 family.

The sequence is that of Large ribosomal subunit protein bL32 from Photorhabdus laumondii subsp. laumondii (strain DSM 15139 / CIP 105565 / TT01) (Photorhabdus luminescens subsp. laumondii).